The sequence spans 179 residues: Large ribosomal subunit protein uL5 (179 aa).

The protein belongs to the universal ribosomal protein uL5 family. As to quaternary structure, part of the 50S ribosomal subunit; part of the 5S rRNA/L5/L18/L25 subcomplex. Contacts the 5S rRNA and the P site tRNA. Forms a bridge to the 30S subunit in the 70S ribosome.

In terms of biological role, this is one of the proteins that bind and probably mediate the attachment of the 5S RNA into the large ribosomal subunit, where it forms part of the central protuberance. In the 70S ribosome it contacts protein S13 of the 30S subunit (bridge B1b), connecting the 2 subunits; this bridge is implicated in subunit movement. Contacts the P site tRNA; the 5S rRNA and some of its associated proteins might help stabilize positioning of ribosome-bound tRNAs. The protein is Large ribosomal subunit protein uL5 of Rickettsia typhi (strain ATCC VR-144 / Wilmington).